Consider the following 297-residue polypeptide: Tumor necrosis factor receptor superfamily member 27 (297 aa).

Over 1 to 138 (MDCQENEYWD…TPTVPPQEAT (138 aa)) the chain is Extracellular. TNFR-Cys repeat units lie at residues 2–41 (DCQE…DAYC), 43–83 (ACPP…NAVC), and 85–118 (DCLP…EVQC). 8 cysteine pairs are disulfide-bonded: cysteine 3–cysteine 15, cysteine 18–cysteine 31, cysteine 21–cysteine 41, cysteine 44–cysteine 58, cysteine 61–cysteine 75, cysteine 64–cysteine 83, cysteine 86–cysteine 104, and cysteine 107–cysteine 118. N-linked (GlcNAc...) asparagine glycosylation is present at asparagine 74. A helical; Signal-anchor for type III membrane protein transmembrane segment spans residues 139–159 (LVALVSSLLVVFTLAFLGLFF). Topologically, residues 160 to 297 (LYCKQFFNRH…LNVPFEVPSP (138 aa)) are cytoplasmic. Residues 272–281 (ETLGGNTVES) show a composition bias toward polar residues. Positions 272-297 (ETLGGNTVESTGDRLELNVPFEVPSP) are disordered.

As to quaternary structure, associates with TRAF1, TRAF3 and TRAF6.

The protein resides in the membrane. Functionally, receptor for EDA isoform A2, but not for EDA isoform A1. Mediates the activation of the NF-kappa-B and JNK pathways. Activation seems to be mediated by binding to TRAF3 and TRAF6. The chain is Tumor necrosis factor receptor superfamily member 27 (EDA2R) from Homo sapiens (Human).